The following is a 1832-amino-acid chain: Zinc finger protein 646 (1832 aa).

8 consecutive C2H2-type zinc fingers follow at residues 8–31 (LSCS…ELLH), 48–70 (YRCQ…RRTH), 75–97 (FPCT…MRTH), 239–261 (YKCS…RQSH), 266–288 (YPCA…SRLH), 294–316 (YHCP…QQSH), 374–396 (FRCG…RKSH), and 401–424 (YPCS…RAHH). The disordered stretch occupies residues 26-47 (HRELLHPSPNQDSEEADSIPRP). Over residues 94–108 (MRTHAPEGRRRHRPP) the composition is skewed to basic residues. The interval 94 to 200 (MRTHAPEGRR…TNSARAPPLP (107 aa)) is disordered. Positions 313-329 (QQSHEGERQEPRWEEKG) are enriched in basic and acidic residues. The tract at residues 313–346 (QQSHEGERQEPRWEEKGMPTTNGHTDESSQDQLP) is disordered. Lys451 participates in a covalent cross-link: Glycyl lysine isopeptide (Lys-Gly) (interchain with G-Cter in SUMO2). 2 consecutive C2H2-type zinc fingers follow at residues 465-487 (YKCS…RHSH) and 492-514 (YQCS…VRVH). Residues Lys534 and Lys557 each participate in a glycyl lysine isopeptide (Lys-Gly) (interchain with G-Cter in SUMO2) cross-link. The C2H2-type 11 zinc finger occupies 575–597 (HICSICGLLFEDAESLERHGLTH). Phosphoserine is present on Ser612. 2 C2H2-type zinc fingers span residues 617–639 (FACR…RQTH) and 644–666 (FSCG…LRRH). The disordered stretch occupies residues 660-810 (KNHLRRHSRR…QPNSSSHSAN (151 aa)). Over residues 661-678 (NHLRRHSRRRSRRHRKRA) the composition is skewed to basic residues. Residue Lys688 forms a Glycyl lysine isopeptide (Lys-Gly) (interchain with G-Cter in SUMO2) linkage. A compositionally biased stretch (basic and acidic residues) spans 735-767 (EGDKCGLERDETHFQGDKESGGTGEGLERKDAS). The segment covering 798–810 (ATGQPNSSSHSAN) has biased composition (polar residues). 3 C2H2-type zinc fingers span residues 821 to 843 (HTCS…RPCH), 848 to 870 (YQCS…FQNH), and 881 to 904 (FLCC…RQAH). Positions 901–931 (RQAHSSSGMTEGSEEEGEEEGVAEAAPARSP) are disordered. Over residues 912–922 (GSEEEGEEEGV) the composition is skewed to acidic residues. Residues 958-980 (HICGCCGQTYDDLGSLERHHQSQ) form a C2H2-type 17; degenerate zinc finger. C2H2-type zinc fingers lie at residues 1052–1074 (FRCN…RKIH) and 1079–1101 (FLCP…LRNH). Residues 1103 to 1148 (RCKGSEPQVGPIPEAAGSSELQVGPIPEGGSNKPQHMAEEGPGQAE) form a disordered region. Glycyl lysine isopeptide (Lys-Gly) (interchain with G-Cter in SUMO2) cross-links involve residues Lys1157, Lys1168, and Lys1178. C2H2-type zinc fingers lie at residues 1203 to 1225 (FSCE…RQSH), 1230 to 1252 (FGCQ…RRIH), 1258 to 1280 (FRCS…QRVH), 1299 to 1321 (FRCG…RRSH), 1326 to 1348 (YSCP…QRLH), and 1364 to 1386 (VRCA…LREH). The disordered stretch occupies residues 1274–1294 (ASHQRVHMERRGGGGTRKATR). Disordered stretches follow at residues 1377–1481 (GSLE…WVPQ) and 1509–1529 (TLSH…QPGS). The span at 1378 to 1393 (SLERHLREHEETEREP) shows a compositional bias: basic and acidic residues. A compositionally biased stretch (polar residues) spans 1406–1417 (SEANLTGSQGLE). Positions 1427–1438 (PHLEDGVPRPGE) are enriched in basic and acidic residues. The segment covering 1460–1475 (GKAGGWPVGGGLGNHS) has biased composition (gly residues). 6 consecutive C2H2-type zinc fingers follow at residues 1557-1579 (HYCL…SHNH), 1585-1607 (FACP…LQAH), 1677-1699 (FRCT…QKAH), 1704-1726 (YPCS…SRTH), 1732-1754 (HCCS…GRVH), and 1761-1783 (FTCP…QQQH). The tract at residues 1606–1672 (AHARGHSQVP…QAVTSMAAED (67 aa)) is disordered. The tract at residues 1781 to 1832 (QQHQEEWTVAGSGAPVAPVTGRGDLPLPPPPTPTTPLLDPSPQWPADLSFSL) is disordered.

Belongs to the krueppel C2H2-type zinc-finger protein family.

The protein localises to the nucleus. Its function is as follows. May be involved in transcriptional regulation. The sequence is that of Zinc finger protein 646 from Homo sapiens (Human).